The chain runs to 538 residues: MFS-type transporter oryC (538 aa).

The next 6 helical transmembrane spans lie at 14 to 34, 67 to 87, 96 to 116, 120 to 140, 162 to 182, and 186 to 206; these read LTGG…MSLF, TVTA…FTIG, ILLG…SFSL, FVGR…APIW, IFGF…GGSI, and FPLA…PWLP. N-linked (GlcNAc...) asparagine glycosylation occurs at Asn-268. 6 helical membrane passes run 288 to 308, 315 to 335, 342 to 362, 379 to 399, 416 to 436, and 443 to 463; these read FGGI…SVGL, LLAA…VLLV, GLML…TILL, VAFF…VPWL, VATA…PIGI, and FWIV…FLYP. An N-linked (GlcNAc...) asparagine glycan is attached at Asn-467.

This sequence belongs to the major facilitator superfamily. Sugar transporter (TC 2.A.1.1) family.

The protein resides in the membrane. Its function is as follows. MFS-type transporter; part of the gene cluster that mediates the biosynthesis of oryzines, natural products with an unusual maleidride backbone. The protein is MFS-type transporter oryC of Aspergillus oryzae (strain ATCC 42149 / RIB 40) (Yellow koji mold).